A 473-amino-acid chain; its full sequence is Probable dipeptidase (473 aa).

Residue C10 is part of the active site.

This sequence belongs to the peptidase C69 family.

It carries out the reaction an L-aminoacyl-L-amino acid + H2O = 2 an L-alpha-amino acid. The polypeptide is Probable dipeptidase (Latilactobacillus sakei (Lactobacillus sakei)).